The sequence spans 364 residues: WAT1-related protein At3g30340 (364 aa).

The next 10 helical transmembrane spans lie at 9–29, 41–61, 76–96, 102–122, 138–158, 183–203, 215–235, 251–271, 277–297, and 304–324; these read WKAV…NVMF, VATT…AIFL, SLFF…LIGL, TFSL…ALVF, LLGT…KGTA, WAMG…WFIV, YTST…LSLI, VLAL…GMSW, GAVF…IFSF, and IYCG…ILLW. 2 EamA domains span residues 26–152 and 195–323; these read NVMF…LVLT and IIWS…YILL.

It belongs to the drug/metabolite transporter (DMT) superfamily. Plant drug/metabolite exporter (P-DME) (TC 2.A.7.4) family.

It localises to the membrane. The sequence is that of WAT1-related protein At3g30340 from Arabidopsis thaliana (Mouse-ear cress).